Here is a 144-residue protein sequence, read N- to C-terminus: Transcription antitermination protein NusB (144 aa).

It belongs to the NusB family.

Functionally, involved in transcription antitermination. Required for transcription of ribosomal RNA (rRNA) genes. Binds specifically to the boxA antiterminator sequence of the ribosomal RNA (rrn) operons. In Paraburkholderia xenovorans (strain LB400), this protein is Transcription antitermination protein NusB.